A 172-amino-acid polypeptide reads, in one-letter code: Adenine phosphoribosyltransferase (172 aa).

The protein belongs to the purine/pyrimidine phosphoribosyltransferase family. Homodimer.

Its subcellular location is the cytoplasm. It catalyses the reaction AMP + diphosphate = 5-phospho-alpha-D-ribose 1-diphosphate + adenine. It functions in the pathway purine metabolism; AMP biosynthesis via salvage pathway; AMP from adenine: step 1/1. Functionally, catalyzes a salvage reaction resulting in the formation of AMP, that is energically less costly than de novo synthesis. The protein is Adenine phosphoribosyltransferase of Clostridium tetani (strain Massachusetts / E88).